We begin with the raw amino-acid sequence, 372 residues long: Cyclin-dependent kinase 9 (372 aa).

Residues 19 to 315 (YEKLAKIGQG…SDDALNHDFF (297 aa)) form the Protein kinase domain. 25–33 (IGQGTFGEV) lines the ATP pocket. An N6-acetyllysine; by EP300/CBP, PCAF/KAT2B and GCN5/KAT2A modification is found at Lys-44. ATP is bound by residues Lys-48 and 104 to 106 (DFC). Lys-48 carries the post-translational modification N6-acetyllysine; by PCAF/KAT2B and GCN5/KAT2A. Asp-149 acts as the Proton acceptor in catalysis. The T-loop stretch occupies residues 166–191 (ADFGLARAFSLAKNSQPNRYTNRVVT). Residue Asp-167 participates in ATP binding. The residue at position 175 (Ser-175) is a Phosphoserine. At Thr-186 the chain carries Phosphothreonine; by CaMK1D. The interval 343–372 (RRKGSQITQQSTNQSRNPATTNQTEFERVF) is disordered. Ser-347 is modified (phosphoserine; by CDK9 and PKA). The span at 347 to 366 (SQITQQSTNQSRNPATTNQT) shows a compositional bias: polar residues. Position 350 is a phosphothreonine; by CDK9 (Thr-350). Phosphoserine; by CDK9 is present on Ser-353. Phosphothreonine; by CDK9 is present on Thr-354. Ser-357 bears the Phosphoserine; by CDK9 mark. A phosphothreonine; by CDK9 mark is found at Thr-362 and Thr-363.

The protein belongs to the protein kinase superfamily. CMGC Ser/Thr protein kinase family. CDC2/CDKX subfamily. As to quaternary structure, component of the super elongation complex (SEC), at least composed of EAF1, EAF2, CDK9, MLLT3/AF9, AFF (AFF1 or AFF4), the P-TEFb complex and ELL (ELL, ELL2 or ELL3). Associates with CCNT1/cyclin-T1, CCNT2/cyclin-T2 (isoform A and isoform B) or CCNK/cyclin-K to form active P-TEFb. P-TEFb forms a complex with AFF4/AF5Q31 and is part of the super elongation complex (SEC). Component of a complex which is composed of at least 5 members: HTATSF1/Tat-SF1, P-TEFb complex, RNA pol II, SUPT5H, and NCL/nucleolin. Associates with UBR5 and forms a transcription regulatory complex composed of CDK9, RNAP II, UBR5 and TFIIS/TCEA1 that can stimulate target gene transcription (e.g. gamma fibrinogen/FGG) by recruiting their promoters. Component of the 7SK snRNP inactive complex which is composed of at least 8 members: P-TEFb (composed of CDK9 and CCNT1/cyclin-T1), HEXIM1, HEXIM2, LARP7, BCDIN3, SART3 proteins and 7SK and U6 snRNAs. This inactive 7SK snRNP complex can also interact with NCOR1 and HDAC3, probably to regulate CDK9 acetylation. Release of P-TEFb from P-TEFb/7SK snRNP complex requires both PP2B to transduce calcium Ca(2+) signaling in response to stimuli (e.g. UV or hexamethylene bisacetamide (HMBA)), and PPP1CA to dephosphorylate Thr-186. This released P-TEFb remains inactive in the pre-initiation complex with BRD4 until new Thr-186 phosphorylation occurs after the synthesis of a short RNA. Interacts with BRD4; to target chromatin binding. Interacts with JMJD6. Interacts with activated nuclear STAT3 and RELA/p65. Binds to AR and MYOD1. Forms a complex composed of CDK9, CCNT1/cyclin-T1, EP300 and GATA4 that stimulates hypertrophy in cardiomyocytes. The large PER complex involved in the repression of transcriptional termination is composed of at least PER2, CDK9, DDX5, DHX9, NCBP1 and POLR2A (active). Interacts with HSF1. Interacts with TBX21. Interacts with WDR43. Interacts with ZMYND8; the association appears to occur between homodimeric ZMYND8 and the activated form of the P-TEFb complex. Autophosphorylation at Thr-186, Ser-347, Thr-350, Ser-353, Thr-354 and Ser-357 triggers kinase activity by promoting cyclin and substrate binding upon conformational changes. Thr-186 phosphorylation requires the calcium Ca(2+) signaling pathway, including CaMK1D and calmodulin. This inhibition is relieved by Thr-29 dephosphorylation. Phosphorylation at Ser-175 inhibits kinase activity. Can be phosphorylated on either Thr-362 or Thr-363 but not on both simultaneously. In terms of processing, dephosphorylation of Thr-186 by PPM1A and PPM1B blocks CDK9 activity and may lead to CDK9 proteasomal degradation. However, PPP1CA-mediated Thr-186 dephosphorylation is required to release P-TEFb from its inactive P-TEFb/7SK snRNP complex. Dephosphorylated at Ser-347 by the PNUTS-PP1 complex during RNA polymerase II transcription pause-release. Dephosphorylation of C-terminus Thr and Ser residues by protein phosphatase-1 (PP1) triggers CDK9 activity. Post-translationally, N6-acetylation of Lys-44 promotes kinase activity, whereas acetylation of both Lys-44 and Lys-48 mediated by PCAF/KAT2B and GCN5/KAT2A reduces kinase activity. The acetylated form associates with PML bodies in the nuclear matrix and with the transcriptionally silent HIV-1 genome; deacetylated upon transcription stimulation. Deacetylated by SIRT7, promoting the kinase activity and subsequent 'Ser-2' phosphorylation of the C-terminal domain (CTD) of RNA polymerase II. Polyubiquitinated and thus activated by UBR5. This ubiquitination is promoted by TFIIS/TCEA1 and favors 'Ser-2' phosphorylation of RPB1/POLR2A CTD. In terms of tissue distribution, expressed at high levels in brain and kidney.

It localises to the nucleus. The protein resides in the cytoplasm. The protein localises to the PML body. The enzyme catalyses L-seryl-[protein] + ATP = O-phospho-L-seryl-[protein] + ADP + H(+). It catalyses the reaction L-threonyl-[protein] + ATP = O-phospho-L-threonyl-[protein] + ADP + H(+). It carries out the reaction [DNA-directed RNA polymerase] + ATP = phospho-[DNA-directed RNA polymerase] + ADP + H(+). Activation by Thr-186 phosphorylation is calcium Ca(2+) signaling pathway-dependent; actively inactivated by dephosphorylation mediated by PPP1CA, PPM1A and PPM1B. Reversibly repressed by acetylation at Lys-44 and Lys-48. Functionally, protein kinase involved in the regulation of transcription. Member of the cyclin-dependent kinase pair (CDK9/cyclin-T) complex, also called positive transcription elongation factor b (P-TEFb), which facilitates the transition from abortive to productive elongation by phosphorylating the CTD (C-terminal domain) of the large subunit of RNA polymerase II (RNAP II) POLR2A, SUPT5H and RDBP. This complex is inactive when in the 7SK snRNP complex form. Phosphorylates EP300, MYOD1, RPB1/POLR2A and AR and the negative elongation factors DSIF and NELFE. Regulates cytokine inducible transcription networks by facilitating promoter recognition of target transcription factors (e.g. TNF-inducible RELA/p65 activation and IL-6-inducible STAT3 signaling). Promotes RNA synthesis in genetic programs for cell growth, differentiation and viral pathogenesis. P-TEFb is also involved in cotranscriptional histone modification, mRNA processing and mRNA export. Modulates a complex network of chromatin modifications including histone H2B monoubiquitination (H2Bub1), H3 lysine 4 trimethylation (H3K4me3) and H3K36me3; integrates phosphorylation during transcription with chromatin modifications to control co-transcriptional histone mRNA processing. The CDK9/cyclin-K complex has also a kinase activity towards CTD of RNAP II and can substitute for CDK9/cyclin-T P-TEFb in vitro. Replication stress response protein; the CDK9/cyclin-K complex is required for genome integrity maintenance, by promoting cell cycle recovery from replication arrest and limiting single-stranded DNA amount in response to replication stress, thus reducing the breakdown of stalled replication forks and avoiding DNA damage. In addition, probable function in DNA repair of isoform 2 via interaction with KU70/XRCC6. Promotes cardiac myocyte enlargement. RPB1/POLR2A phosphorylation on 'Ser-2' in CTD activates transcription. AR phosphorylation modulates AR transcription factor promoter selectivity and cell growth. DSIF and NELF phosphorylation promotes transcription by inhibiting their negative effect. The phosphorylation of MYOD1 enhances its transcriptional activity and thus promotes muscle differentiation. Catalyzes phosphorylation of KAT5, promoting KAT5 recruitment to chromatin and histone acetyltransferase activity. The chain is Cyclin-dependent kinase 9 (Cdk9) from Mus musculus (Mouse).